Here is a 93-residue protein sequence, read N- to C-terminus: Large ribosomal subunit protein bL31B (93 aa).

It belongs to the bacterial ribosomal protein bL31 family. Type B subfamily. Part of the 50S ribosomal subunit.

The chain is Large ribosomal subunit protein bL31B from Pseudomonas syringae pv. tomato (strain ATCC BAA-871 / DC3000).